A 263-amino-acid polypeptide reads, in one-letter code: Ret finger protein-like 4B (263 aa).

An RING-type zinc finger spans residues Cys11–Arg53. Residues His76–Pro263 form the B30.2/SPRY domain.

The protein is Ret finger protein-like 4B (RFPL4B) of Homo sapiens (Human).